We begin with the raw amino-acid sequence, 285 residues long: Chitinase 4 (285 aa).

The N-terminal stretch at 1–27 (MAAKMATMVALVFGLALLLSAAAPAAA) is a signal peptide. The Chitin-binding type-1 domain maps to 28-62 (QNCGCQDGYCCSQWGYCGTTEAYCGQGCQSGPCWG). Intrachain disulfides connect Cys30-Cys38, Cys32-Cys44, Cys37-Cys51, Cys55-Cys60, Cys104-Cys153, Cys166-Cys175, and Cys253-Cys285. Glu148 serves as the catalytic Proton donor.

Belongs to the glycosyl hydrolase 19 family. Chitinase class IV subfamily. Expressed at low levels in leaves, sheaths and meristems.

The catalysed reaction is Random endo-hydrolysis of N-acetyl-beta-D-glucosaminide (1-&gt;4)-beta-linkages in chitin and chitodextrins.. Functionally, hydrolyzes chitin and may function in reproductive organs during embryogenesis and seed maturation. This Oryza sativa subsp. japonica (Rice) protein is Chitinase 4 (Cht4).